The chain runs to 355 residues: Protein pelota homolog (355 aa).

This sequence belongs to the eukaryotic release factor 1 family. Pelota subfamily. In terms of assembly, monomer. Requires a divalent metal cation as cofactor.

It localises to the cytoplasm. In terms of biological role, may function in recognizing stalled ribosomes, interact with stem-loop structures in stalled mRNA molecules, and effect endonucleolytic cleavage of the mRNA. May play a role in the release non-functional ribosomes and degradation of damaged mRNAs. Has endoribonuclease activity. This Halorubrum lacusprofundi (strain ATCC 49239 / DSM 5036 / JCM 8891 / ACAM 34) protein is Protein pelota homolog.